A 132-amino-acid polypeptide reads, in one-letter code: Small ribosomal subunit protein uS8 (132 aa).

The protein belongs to the universal ribosomal protein uS8 family. In terms of assembly, part of the 30S ribosomal subunit. Contacts proteins S5 and S12.

Its function is as follows. One of the primary rRNA binding proteins, it binds directly to 16S rRNA central domain where it helps coordinate assembly of the platform of the 30S subunit. This chain is Small ribosomal subunit protein uS8, found in Borreliella afzelii (strain PKo) (Borrelia afzelii).